Consider the following 1786-residue polypeptide: MICRVDYGSNDEEYDGPELQVVTEEDHLLPKREYLSAAFALSGLNSRASVFDDEDYDEQGGQEKEHVPVEKSFDSEEREPVVLKEEKPVKHEKEASILGNKNQMDTGDVQEELVVGLSEATLDEKRVTPLPTLYLEDDGMVILQFSEIFAIQEPQKKRQKREIRCITYRDKYISMDISELIEDDEEVLLKSHGRIDTHGKKTDQIQLDVPLPIRERSQLVKSGIVRDTTSESREFTKLGRDSCIMGELLKQDLKDDNSSLCQSQLTMEVFPLDQQEWEHLILWEISPQFSANCCEGFKSGLESAGIMVQVRASNSVTEQESLNVMNSGGQTQGDNNNMLEPFFVNPLESFGSRGSQSTNESTNKSRHHPQLLRLESQWDEDHYRENGDAGRENLKQLNSDARGRLSGLALQDRDMWDESWLDSIIWESDKDLSRSKLIFDLQDEQMIFEVPNNKERKYLQLHAGSRIVSRSSKSKDGSFQEGCGSNSGWQFNISNDKFYMNGKSAQKLQGNAKKSTVHSLRVFHSAPAIKLQTMKIKLSNKERANFHRPKALWYPHDNELAIKQQKILPTQGSMTIVVKSLGGKGSLLTVGREESVSSLKAKASRKLDFKETEAVKMFYMGKELEDEKSLAEQNVQPNSLVHLLRTKVHLWPWAQKLPGENKSLRPPGAFKKKSDLSNQDGHVFLMEYCEERPLMLSNAGMGANLCTYYQKSSPEDQHGNLLRNQSDTLGSVIILEHGNKSPFLGEVHGGCSQSSVETNMYKAPVFPHRLQSTDYLLVRSAKGKLSLRRINKIVAVGQQEPRMEIMSPASKNLHAYLVNRMMAYVYREFKHRDRIAADELSFSFSNISDATVRKYMQVCSDLERDANGKACWSKKRKFDKIPLGLNTLVAPEDVCSYESMLAGLFRLKHLGITRFTLPASISTALAQLPDERIAAASHIARELQITPWNLSSSFVTCATQGRENIERLEITGVGDPSGRGLGFSYVRVAPKSSAASEHKKKKAAACRGVPTVTGTDADPRRLSMEAAREVLLKFNVPDEIIAKQTQRHRTAMIRKISSEQAASGGKVGPTTVGMFSRSQRMSFLQLQQQAREMCHEIWDRQRLSLSACDDDGNESENEANSDLDSFVGDLEDLLDAEDGGEGEESNKSMNEKLDGVKGLKMRRWPSQVEKDEEIEDEAAEYVELCRLLMQDENDKKKKKLKDVGEGIGSFPPPRSNFEPFIDKKYIATEPDASFLIVNESTVKHTKNVDKATSKSPKDKQVKEIGTPICQMKKILKENQKVFMGKKTARANFVCGACGQHGHMKTNKHCPKYRRNTESQPESMDMKKSTGKPSSSDLSGEVWLTPIDNKKPAPKSATKISVNEATKVGDSTSKTPGSSDVAAVSEIDSGTKLTSRKLKISSKAKPKASKVESDSPFHSLMPAYSRERGESELHNPSVSGQLLPSTETDQAASSRYTTSVPQPSLSIDKDQAESCRPHRVIWPPTGKEHSQKKLVIKRLKEITDHDSGSLEETPQFESRKTKRMAELADFQRQQRLRLSENFLDWGPKDDRKWRKEQDISTELHREGKVRRAYDDSTVSEERSEIAESRRYREVIRSEREEEKRRKAKQKKKLQRGILENYPPRRNDGISSESGQNINSLCVSDFERNRTEYAPQPKRRKKGQVGLANILESIVDTLRVKEVNVSYLFLKPVTKKEAPNYLEIVKCPMDLSTIRDKVRRMEYRDRQQFRHDVWQIKFNAHLYNDGRNLSIPPLADELLVKCDRLLDEYRDELKEAEKGIVDSSDSLR.

Disordered regions lie at residues Glu54 to Leu83 and Phe350 to Leu372. Residues Gly61–Leu83 show a composition bias toward basic and acidic residues. A compositionally biased stretch (polar residues) spans Ser352–Thr362. The Ubiquitin-like domain occupies Met574–Leu650. A compositionally biased stretch (basic residues) spans Met1303–Arg1313. Disordered regions lie at residues Met1303–Ala1382, Leu1397–Ala1471, and Ser1596–Gln1634. Residues Thr1357–Ser1377 are compositionally biased toward polar residues. Over residues Leu1397 to Ala1407 the composition is skewed to basic residues. The span at His1433–Leu1464 shows a compositional bias: polar residues. Coiled-coil stretches lie at residues Arg1591 to Tyr1620 and Leu1752 to Arg1786. Over residues Arg1604–Gln1613 the composition is skewed to basic residues. One can recognise a Bromo domain in the interval Lys1656–Ala1774.

This sequence belongs to the TAF1 family. Component of the TFIID complex. TFIID is composed of TATA binding protein (TBP) and a number of TBP-associated factors (TAFs) whose MWs range from 14-217 kDa. As to expression, expressed in roots, shoots, leaves and inflorescences.

The protein resides in the nucleus. TAFs are components of the transcription factor IID (TFIID) complex that is essential for mediating regulation of RNA polymerase transcription. Core scaffold of the TFIID complex. Acts as a histone acetyltransferase involved in the light regulation of growth and gene expression. Required for H3K9, H3K27, and H4K12 acetylation on the target promoters. This is Transcription initiation factor TFIID subunit 1b (TAF1B) from Arabidopsis thaliana (Mouse-ear cress).